Reading from the N-terminus, the 157-residue chain is Protein Smg (157 aa).

Belongs to the Smg family.

This chain is Protein Smg, found in Buchnera aphidicola subsp. Acyrthosiphon pisum (strain Tuc7).